We begin with the raw amino-acid sequence, 558 residues long: Laccase-10 (558 aa).

Residues 1 to 22 (MVFPIRILVLFALLAFPACVHG) form the signal peptide. Plastocyanin-like domains are found at residues 30-146 (NVVT…PKLG) and 157-308 (EEVI…YSGT). Residue Asn-76 is glycosylated (N-linked (GlcNAc...) asparagine). Cu cation contacts are provided by His-80 and His-82. Residue Asn-112 is glycosylated (N-linked (GlcNAc...) asparagine). His-125 and His-127 together coordinate Cu cation. Residues Asn-185, Asn-296, Asn-323, Asn-373, Asn-383, Asn-400, and Asn-441 are each glycosylated (N-linked (GlcNAc...) asparagine). The 135-residue stretch at 408-542 (DFPAKPRRVF…KMAFLVENGK (135 aa)) folds into the Plastocyanin-like 3 domain. Residues His-459, His-462, His-464, His-521, Cys-522, His-523, and His-527 each contribute to the Cu cation site. Asn-545 carries N-linked (GlcNAc...) asparagine glycosylation.

This sequence belongs to the multicopper oxidase family. Cu cation is required as a cofactor. As to expression, ubiquitous, with lower levels in siliques.

The protein localises to the secreted. It localises to the extracellular space. Its subcellular location is the apoplast. It carries out the reaction 4 hydroquinone + O2 = 4 benzosemiquinone + 2 H2O. Lignin degradation and detoxification of lignin-derived products. The protein is Laccase-10 (LAC10) of Arabidopsis thaliana (Mouse-ear cress).